Reading from the N-terminus, the 127-residue chain is Large ribosomal subunit protein bL17 (127 aa).

The protein belongs to the bacterial ribosomal protein bL17 family. As to quaternary structure, part of the 50S ribosomal subunit. Contacts protein L32.

This is Large ribosomal subunit protein bL17 from Chromohalobacter salexigens (strain ATCC BAA-138 / DSM 3043 / CIP 106854 / NCIMB 13768 / 1H11).